The primary structure comprises 174 residues: Crossover junction endodeoxyribonuclease RuvC (174 aa).

Residues Asp8, Glu68, and Asp140 contribute to the active site. Residues Asp8, Glu68, and Asp140 each contribute to the Mg(2+) site.

Belongs to the RuvC family. Homodimer which binds Holliday junction (HJ) DNA. The HJ becomes 2-fold symmetrical on binding to RuvC with unstacked arms; it has a different conformation from HJ DNA in complex with RuvA. In the full resolvosome a probable DNA-RuvA(4)-RuvB(12)-RuvC(2) complex forms which resolves the HJ. Mg(2+) is required as a cofactor.

Its subcellular location is the cytoplasm. It carries out the reaction Endonucleolytic cleavage at a junction such as a reciprocal single-stranded crossover between two homologous DNA duplexes (Holliday junction).. In terms of biological role, the RuvA-RuvB-RuvC complex processes Holliday junction (HJ) DNA during genetic recombination and DNA repair. Endonuclease that resolves HJ intermediates. Cleaves cruciform DNA by making single-stranded nicks across the HJ at symmetrical positions within the homologous arms, yielding a 5'-phosphate and a 3'-hydroxyl group; requires a central core of homology in the junction. The consensus cleavage sequence is 5'-(A/T)TT(C/G)-3'. Cleavage occurs on the 3'-side of the TT dinucleotide at the point of strand exchange. HJ branch migration catalyzed by RuvA-RuvB allows RuvC to scan DNA until it finds its consensus sequence, where it cleaves and resolves the cruciform DNA. This chain is Crossover junction endodeoxyribonuclease RuvC, found in Legionella pneumophila subsp. pneumophila (strain Philadelphia 1 / ATCC 33152 / DSM 7513).